The chain runs to 134 residues: Small ribosomal subunit protein bS16 (134 aa).

The segment at 81–134 (LAKRPARSNPKKAEPGKKAQERLAAARQAEEEAKAAAEAAAAAPAEAPAEEAAS) is disordered. Over residues 91–101 (KKAEPGKKAQE) the composition is skewed to basic and acidic residues. Positions 116 to 134 (AAEAAAAAPAEAPAEEAAS) are enriched in low complexity.

This sequence belongs to the bacterial ribosomal protein bS16 family.

The protein is Small ribosomal subunit protein bS16 of Chelativorans sp. (strain BNC1).